Here is a 399-residue protein sequence, read N- to C-terminus: Phosphatidate cytidylyltransferase 5, chloroplastic (399 aa).

The transit peptide at 1-26 directs the protein to the chloroplast; it reads MAPFVEVCRYKPLPLSLSSLCTCPCR. Transmembrane regions (helical) follow at residues 123–143, 187–207, 217–237, 266–286, 309–329, and 333–353; these read VGGI…AAVL, FGHI…ALLL, LSST…WVKL, VGLV…TFAF, AFAG…SLSW, and LVST…GDLT.

It belongs to the CDS family. It depends on Mg(2+) as a cofactor.

It is found in the plastid. Its subcellular location is the chloroplast membrane. It carries out the reaction a 1,2-diacyl-sn-glycero-3-phosphate + CTP + H(+) = a CDP-1,2-diacyl-sn-glycerol + diphosphate. Its pathway is phospholipid metabolism; CDP-diacylglycerol biosynthesis; CDP-diacylglycerol from sn-glycerol 3-phosphate: step 3/3. Highest activities is obtained at about 30 mM CTP and 2 mM phosphatidic acid (PA). In terms of biological role, may be involved in the synthesis of minor phospholipids and in modulation of IP3-mediated signal transduction. Promotes the biosynthesis of plastidial phosphatidylglycerol (PG) which is required for structure and function of thylakoid membranes and, hence, for photoautotrophic growth. The sequence is that of Phosphatidate cytidylyltransferase 5, chloroplastic from Arabidopsis thaliana (Mouse-ear cress).